A 615-amino-acid chain; its full sequence is ABC transporter G family member 22 (615 aa).

The ABC transporter domain occupies 31 to 279; the sequence is ITFKDLAYSV…EIGFPFPDQT (249 aa). ATP is bound at residue 67 to 74; that stretch reads GPSGSGKT. Residues 364-610 form the ABC transmembrane type-2 domain; sequence SNCLVRFAVA…TMVFLCLHYF (247 aa). 6 consecutive transmembrane segments (helical) span residues 370-390, 400-420, 442-462, 477-497, 508-528, and 587-607; these read FAVA…LGMD, VLFY…SLFI, LALM…LGTI, FFAM…MLII, FAVG…FVPI, and INLI…FLCL.

The protein belongs to the ABC transporter superfamily. ABCG family. Eye pigment precursor importer (TC 3.A.1.204) subfamily.

The protein resides in the membrane. Its function is as follows. May be involved in cell migration. This is ABC transporter G family member 22 (abcG22) from Dictyostelium discoideum (Social amoeba).